The primary structure comprises 311 residues: Protein lifeguard 3 (311 aa).

Disordered regions lie at residues 1-37 (MSNPSAPPPYEDRNPLYPGPPPPGGYGQPSVLPGGYP) and 50-72 (PAGYPQPMPPTHPMPMNYGPGHG). Positions 53-62 (YPQPMPPTHP) are enriched in pro residues. Phosphoserine occurs at positions 81 and 83. 7 consecutive transmembrane segments (helical) span residues 110–130 (LLITVAIIAIFTFVEPVSAFV), 134–154 (VAVYYVSYAVFVVTYLILACC), 165–185 (IILLTLFTFAMGFMTGTISSM), 190–210 (AVIIAMIITAVVSISVTIFCF), 221–241 (GLFCVLGIVLLVTGIVTSIVL), 246–266 (VYWLHMLYAALGAICFTLFLA), and 286–306 (ITGALQIYTDIIYIFTFVLQL).

This sequence belongs to the BI1 family. LFG subfamily.

It is found in the membrane. It localises to the lysosome membrane. The protein resides in the endosome membrane. Its function is as follows. Negatively regulates aortic matrix metalloproteinase-9 (MMP9) production and may play a protective role in vascular remodeling. The protein is Protein lifeguard 3 (TMBIM1) of Homo sapiens (Human).